Consider the following 138-residue polypeptide: Small ribosomal subunit protein uS9c (138 aa).

Belongs to the universal ribosomal protein uS9 family.

The protein localises to the plastid. It localises to the chloroplast. The sequence is that of Small ribosomal subunit protein uS9c (rps9) from Phaeodactylum tricornutum (strain CCAP 1055/1).